Here is a 226-residue protein sequence, read N- to C-terminus: Transcription factor bHLH115 (226 aa).

The bHLH domain maps to 66-117 (TGSNSKACREKQRRDRLNDKFTELSSVLEPGRTPKTDKVAIINDAIRMVNQA).

As to quaternary structure, homodimer. Interacts with BTS and BHLH47/PYE.

It localises to the nucleus. This is Transcription factor bHLH115 (BHLH115) from Arabidopsis thaliana (Mouse-ear cress).